Reading from the N-terminus, the 72-residue chain is Translation initiation factor IF-1 (72 aa).

The region spanning 1–72 (MSKSDIIEMQ…TRGRITWRAK (72 aa)) is the S1-like domain.

The protein belongs to the IF-1 family. As to quaternary structure, component of the 30S ribosomal translation pre-initiation complex which assembles on the 30S ribosome in the order IF-2 and IF-3, IF-1 and N-formylmethionyl-tRNA(fMet); mRNA recruitment can occur at any time during PIC assembly.

The protein resides in the cytoplasm. One of the essential components for the initiation of protein synthesis. Stabilizes the binding of IF-2 and IF-3 on the 30S subunit to which N-formylmethionyl-tRNA(fMet) subsequently binds. Helps modulate mRNA selection, yielding the 30S pre-initiation complex (PIC). Upon addition of the 50S ribosomal subunit IF-1, IF-2 and IF-3 are released leaving the mature 70S translation initiation complex. This is Translation initiation factor IF-1 from Clostridium perfringens (strain 13 / Type A).